The following is a 1034-amino-acid chain: Probable outer membrane protein PmpF (1034 aa).

A signal peptide spans Met1 to Ala25. Low complexity-rich tracts occupy residues Ser664–Ala673 and Glu680–Ser709. The segment at Ser664–Ser709 is disordered. The region spanning Arg755–Phe1034 is the Autotransporter domain.

This sequence belongs to the PMP outer membrane protein family.

It is found in the secreted. The protein localises to the cell wall. The protein resides in the cell outer membrane. The chain is Probable outer membrane protein PmpF (pmpF) from Chlamydia trachomatis serovar D (strain ATCC VR-885 / DSM 19411 / UW-3/Cx).